A 241-amino-acid polypeptide reads, in one-letter code: Ribonuclease P protein component 3 (241 aa).

Belongs to the eukaryotic/archaeal RNase P protein component 3 family. As to quaternary structure, consists of a catalytic RNA component and at least 4-5 protein subunits.

It is found in the cytoplasm. It catalyses the reaction Endonucleolytic cleavage of RNA, removing 5'-extranucleotides from tRNA precursor.. In terms of biological role, part of ribonuclease P, a protein complex that generates mature tRNA molecules by cleaving their 5'-ends. This chain is Ribonuclease P protein component 3, found in Methanococcoides burtonii (strain DSM 6242 / NBRC 107633 / OCM 468 / ACE-M).